Here is a 96-residue protein sequence, read N- to C-terminus: DNA-binding protein HmvA (96 aa).

Residues 52-55 (KTIK) form an interaction with DNA region.

It belongs to the archaeal histone HMF family. Homodimer. Dimers then assemble into higher oligomers, with the DNA wrapped around the protein core.

The protein localises to the cytoplasm. It localises to the chromosome. Binds and compact DNA (95 to 150 base pairs) to form nucleosome-like structures that contain positive DNA supercoils. Increases the resistance of DNA to thermal denaturation (in vitro). The polypeptide is DNA-binding protein HmvA (hmvA) (Methanocaldococcus jannaschii (strain ATCC 43067 / DSM 2661 / JAL-1 / JCM 10045 / NBRC 100440) (Methanococcus jannaschii)).